We begin with the raw amino-acid sequence, 106 residues long: Large ribosomal subunit protein eL42 (106 aa).

The protein belongs to the eukaryotic ribosomal protein eL42 family.

This chain is Large ribosomal subunit protein eL42 (RPL44), found in Meyerozyma guilliermondii (strain ATCC 6260 / CBS 566 / DSM 6381 / JCM 1539 / NBRC 10279 / NRRL Y-324) (Yeast).